The following is a 428-amino-acid chain: MDKISQLHDELLLGILSLLPNAKDVVATMVLSKRWRYLWMMVPSLVYDDSYQDIDYGRFSRFVDRSLALHKAPVIDTLHFKLGHICGSGDTLIGAAEKCCVRKLIIKIDDTSSRSSKTDQVILPMSLCSGVHIMLADLKLQNVVLVDVSTPVSFPSLKRLRLKSVKYPGNEFVNNLISSCPVLEDLVVKQCSDDNVTILTVRVPSLKRLSLIQRAELEIDVPHDFVIDTPSLEHLKIVDYTYGSRVVKSTMNRIITASMDVFSPQTKEILGSLTSTKRLFLCLPTSKDAYPVGNIFGSLIHLTICTCETEWLNVLIRVLRDSPNLKTLKIEQYHNLRDEDPRPCWNETSLVPEYLLPSLETFEWVDYEGTKTEKQVVAFILRIASCLKQATIVSFKYIDHDKKLEMLNDFPVSSRRSPACMLAFSWNL.

The F-box domain occupies 2–50 (DKISQLHDELLLGILSLLPNAKDVVATMVLSKRWRYLWMMVPSLVYDDS). Positions 344 to 394 (CWNETSLVPEYLLPSLETFEWVDYEGTKTEKQVVAFILRIASCLKQATIVS) constitute an FBD domain.

The protein is Putative FBD-associated F-box protein At5g56390 of Arabidopsis thaliana (Mouse-ear cress).